Reading from the N-terminus, the 116-residue chain is Proline-rich protein 9 (116 aa).

The protein is Proline-rich protein 9 (PRR9) of Bos taurus (Bovine).